The following is a 315-amino-acid chain: 4-hydroxy-3-methylbut-2-enyl diphosphate reductase (315 aa).

Cysteine 12 lines the [4Fe-4S] cluster pocket. The (2E)-4-hydroxy-3-methylbut-2-enyl diphosphate site is built by histidine 41 and histidine 74. Positions 41 and 74 each coordinate dimethylallyl diphosphate. The isopentenyl diphosphate site is built by histidine 41 and histidine 74. A [4Fe-4S] cluster-binding site is contributed by cysteine 96. Histidine 124 lines the (2E)-4-hydroxy-3-methylbut-2-enyl diphosphate pocket. Histidine 124 contacts dimethylallyl diphosphate. Residue histidine 124 participates in isopentenyl diphosphate binding. The active-site Proton donor is glutamate 126. Threonine 168 provides a ligand contact to (2E)-4-hydroxy-3-methylbut-2-enyl diphosphate. Cysteine 198 serves as a coordination point for [4Fe-4S] cluster. (2E)-4-hydroxy-3-methylbut-2-enyl diphosphate-binding residues include serine 226, serine 227, asparagine 228, and serine 270. 4 residues coordinate dimethylallyl diphosphate: serine 226, serine 227, asparagine 228, and serine 270. Isopentenyl diphosphate-binding residues include serine 226, serine 227, asparagine 228, and serine 270.

It belongs to the IspH family. It depends on [4Fe-4S] cluster as a cofactor.

The catalysed reaction is isopentenyl diphosphate + 2 oxidized [2Fe-2S]-[ferredoxin] + H2O = (2E)-4-hydroxy-3-methylbut-2-enyl diphosphate + 2 reduced [2Fe-2S]-[ferredoxin] + 2 H(+). It catalyses the reaction dimethylallyl diphosphate + 2 oxidized [2Fe-2S]-[ferredoxin] + H2O = (2E)-4-hydroxy-3-methylbut-2-enyl diphosphate + 2 reduced [2Fe-2S]-[ferredoxin] + 2 H(+). The protein operates within isoprenoid biosynthesis; dimethylallyl diphosphate biosynthesis; dimethylallyl diphosphate from (2E)-4-hydroxy-3-methylbutenyl diphosphate: step 1/1. Its pathway is isoprenoid biosynthesis; isopentenyl diphosphate biosynthesis via DXP pathway; isopentenyl diphosphate from 1-deoxy-D-xylulose 5-phosphate: step 6/6. In terms of biological role, catalyzes the conversion of 1-hydroxy-2-methyl-2-(E)-butenyl 4-diphosphate (HMBPP) into a mixture of isopentenyl diphosphate (IPP) and dimethylallyl diphosphate (DMAPP). Acts in the terminal step of the DOXP/MEP pathway for isoprenoid precursor biosynthesis. This chain is 4-hydroxy-3-methylbut-2-enyl diphosphate reductase, found in Azotobacter vinelandii (strain DJ / ATCC BAA-1303).